The chain runs to 412 residues: Nuclear hormone receptor family member nhr-61 (412 aa).

The segment covering 1–19 has biased composition (low complexity); the sequence is MIVDSISSSTASTSSSSPT. The interval 1-23 is disordered; sequence MIVDSISSSTASTSSSSPTRGTP. Residues 27–102 constitute a DNA-binding region (nuclear receptor); it reads SLQCAVCGDV…VGMNPRAVQG (76 aa). 2 consecutive NR C4-type zinc fingers follow at residues 30–50 and 66–90; these read CAVC…CNGC and CRHG…LTRC. In terms of domain architecture, NR LBD spans 144–407; sequence KKEQIIDNLR…DWSQELRDHR (264 aa).

It belongs to the nuclear hormone receptor family.

Its subcellular location is the nucleus. Its function is as follows. Orphan nuclear receptor. This chain is Nuclear hormone receptor family member nhr-61 (nhr-61), found in Caenorhabditis elegans.